The primary structure comprises 394 residues: Phosphatidylinositol 4-phosphate 5-kinase-like protein 1 (394 aa).

One can recognise a PIPK domain in the interval 36-393; it reads DKQSRLGLFE…RLCQWVEAHT (358 aa).

Heterodimerizes with other type I phosphatidylinositol 4-phosphate 5-kinase.

It localises to the cytoplasm. It is found in the membrane. It carries out the reaction a 1,2-diacyl-sn-glycero-3-phospho-(1D-myo-inositol 4-phosphate) + ATP = a 1,2-diacyl-sn-glycero-3-phospho-(1D-myo-inositol-4,5-bisphosphate) + ADP + H(+). May act as a scaffold to localize and regulate type I PI(4)P 5-kinases to specific compartments within the cell, where they generate PI(4,5)P2 for actin nucleation, signaling and scaffold protein recruitment and conversion to PI(3,4,5)P3. The chain is Phosphatidylinositol 4-phosphate 5-kinase-like protein 1 (PIP5KL1) from Homo sapiens (Human).